The following is a 72-amino-acid chain: Large ribosomal subunit protein bL31 (72 aa).

This sequence belongs to the bacterial ribosomal protein bL31 family. Type A subfamily. Part of the 50S ribosomal subunit.

Binds the 23S rRNA. This chain is Large ribosomal subunit protein bL31, found in Prosthecochloris aestuarii (strain DSM 271 / SK 413).